The chain runs to 167 residues: Phosphopantetheine adenylyltransferase (167 aa).

S10 is a binding site for substrate. Residues 10 to 11 (SF) and H18 each bind ATP. Substrate-binding residues include K42, A79, and R93. ATP contacts are provided by residues 94-96 (GLR), E104, and 129-135 (VGHITAT).

This sequence belongs to the bacterial CoaD family. As to quaternary structure, homohexamer. The cofactor is Mg(2+).

It is found in the cytoplasm. It catalyses the reaction (R)-4'-phosphopantetheine + ATP + H(+) = 3'-dephospho-CoA + diphosphate. Its pathway is cofactor biosynthesis; coenzyme A biosynthesis; CoA from (R)-pantothenate: step 4/5. Reversibly transfers an adenylyl group from ATP to 4'-phosphopantetheine, yielding dephospho-CoA (dPCoA) and pyrophosphate. The chain is Phosphopantetheine adenylyltransferase from Methylocella silvestris (strain DSM 15510 / CIP 108128 / LMG 27833 / NCIMB 13906 / BL2).